Reading from the N-terminus, the 260-residue chain is Methyl-coenzyme M reductase subunit gamma (260 aa).

Arginine 123 contributes to the coenzyme M binding site.

The protein belongs to the methyl-coenzyme M reductase gamma subunit family. In terms of assembly, MCR is a hexamer of two alpha, two beta, and two gamma chains, forming a dimer of heterotrimers. Coenzyme F430 serves as cofactor.

The protein localises to the cytoplasm. It catalyses the reaction coenzyme B + methyl-coenzyme M = methane + coenzyme M-coenzyme B heterodisulfide. It functions in the pathway one-carbon metabolism; methyl-coenzyme M reduction; methane from methyl-coenzyme M: step 1/1. Its function is as follows. Component of the methyl-coenzyme M reductase (MCR) I that catalyzes the reductive cleavage of methyl-coenzyme M (CoM-S-CH3 or 2-(methylthio)ethanesulfonate) using coenzyme B (CoB or 7-mercaptoheptanoylthreonine phosphate) as reductant which results in the production of methane and the mixed heterodisulfide of CoB and CoM (CoM-S-S-CoB). This is the final step in methanogenesis. The polypeptide is Methyl-coenzyme M reductase subunit gamma (mcrG) (Methanococcus vannielii).